The primary structure comprises 249 residues: Metal-staphylopine import system ATP-binding protein CntF (249 aa).

Positions 2 to 244 constitute an ABC transporter domain; that stretch reads IKIKDVEKSY…DNAYTRELIE (243 aa). Residue 42–49 coordinates ATP; sequence GESGSGKS.

The protein belongs to the ABC transporter superfamily. The complex is composed of two ATP-binding proteins (CntD and CntF), two transmembrane proteins (CntB and CntC) and a solute-binding protein (CntA).

Its subcellular location is the cell membrane. Its activity is regulated as follows. Nickel/cobalt import is reduced in the presence of zinc. Functionally, part of the ABC transporter complex CntABCDF (Opp1) involved in the uptake of metal in complex with the metallophore staphylopine (StP). Involved in the import of divalent metals ions such as nickel, cobalt and zinc. Probably responsible for energy coupling to the transport system. Plays a major role in nickel/cobalt import in zinc-depleted conditions. Contributes to virulence. Required for full urease activity in vitro. In Staphylococcus aureus (strain NCTC 8325 / PS 47), this protein is Metal-staphylopine import system ATP-binding protein CntF.